The chain runs to 327 residues: tRNA-dihydrouridine(20/20a) synthase (327 aa).

Residues 17-19 (PML) and Q69 contribute to the FMN site. C99 serves as the catalytic Proton donor. FMN contacts are provided by residues K138, H170, 210 to 212 (NGG), and 232 to 233 (GR).

It belongs to the Dus family. DusA subfamily. The cofactor is FMN.

The enzyme catalyses 5,6-dihydrouridine(20) in tRNA + NADP(+) = uridine(20) in tRNA + NADPH + H(+). The catalysed reaction is 5,6-dihydrouridine(20) in tRNA + NAD(+) = uridine(20) in tRNA + NADH + H(+). It carries out the reaction 5,6-dihydrouridine(20a) in tRNA + NADP(+) = uridine(20a) in tRNA + NADPH + H(+). It catalyses the reaction 5,6-dihydrouridine(20a) in tRNA + NAD(+) = uridine(20a) in tRNA + NADH + H(+). Its function is as follows. Catalyzes the synthesis of 5,6-dihydrouridine (D), a modified base found in the D-loop of most tRNAs, via the reduction of the C5-C6 double bond in target uridines. Specifically modifies U20 and U20a in tRNAs. The protein is tRNA-dihydrouridine(20/20a) synthase of Pasteurella multocida (strain Pm70).